The chain runs to 505 residues: Sodium/sialic acid symporter NanT (505 aa).

5 helical membrane passes run 9–29 (LNYI…VYFA), 45–65 (IPGW…ITFM), 80–100 (IGQY…IPFF), 128–148 (FMLF…LALM), and 155–175 (PLMI…LGGI). Residue Ala56 coordinates Na(+). Thr58 provides a ligand contact to N-acetyl-alpha-neuraminate. Leu59 contributes to the Na(+) binding site. Residues Ser60, Thr63, Gln82, and Arg135 each coordinate N-acetyl-alpha-neuraminate. Asp182 provides a ligand contact to Na(+). Helical transmembrane passes span 183–203 (VIQG…ICFN), 227–247 (FSWS…FFAS), 280–300 (LVAC…AYYT), and 318–338 (FYVI…AIFA). Na(+) contacts are provided by Ala339, Ser342, Ser343, Ser345, and Ser346. The next 4 helical transmembrane spans lie at 378 to 398 (TLTV…IMSN), 406 to 426 (FNSL…LGIF), 435 to 455 (ALLG…ATDL), and 457 to 477 (FFFY…LTAP).

It belongs to the sodium:solute symporter (SSF) (TC 2.A.21) family.

The protein resides in the cell inner membrane. The catalysed reaction is N-acetyl-alpha-neuraminate(out) + 2 Na(+)(out) = N-acetyl-alpha-neuraminate(in) + 2 Na(+)(in). Functionally, symporter that uses the Na(+) gradient as the driving force for the uptake of the sialic acid N-acetylneuraminic acid (Neu5Ac). Might play a role in persistence after colonization. This Aliivibrio fischeri (strain ATCC 700601 / ES114) (Vibrio fischeri) protein is Sodium/sialic acid symporter NanT.